The following is a 331-amino-acid chain: Anthranilate phosphoribosyltransferase (331 aa).

5-phospho-alpha-D-ribose 1-diphosphate-binding positions include Gly-79, 82-83 (GD), Thr-87, 89-92 (NIST), 107-115 (KHGNYGATS), and Ala-119. An anthranilate-binding site is contributed by Gly-79. Ser-91 is a binding site for Mg(2+). Anthranilate is bound at residue Asn-110. Arg-165 provides a ligand contact to anthranilate. Asp-223 and Glu-224 together coordinate Mg(2+).

It belongs to the anthranilate phosphoribosyltransferase family. In terms of assembly, homodimer. It depends on Mg(2+) as a cofactor.

It catalyses the reaction N-(5-phospho-beta-D-ribosyl)anthranilate + diphosphate = 5-phospho-alpha-D-ribose 1-diphosphate + anthranilate. Its pathway is amino-acid biosynthesis; L-tryptophan biosynthesis; L-tryptophan from chorismate: step 2/5. In terms of biological role, catalyzes the transfer of the phosphoribosyl group of 5-phosphorylribose-1-pyrophosphate (PRPP) to anthranilate to yield N-(5'-phosphoribosyl)-anthranilate (PRA). The sequence is that of Anthranilate phosphoribosyltransferase from Bacteroides fragilis (strain YCH46).